A 292-amino-acid polypeptide reads, in one-letter code: Bifunctional protein FolD (292 aa).

NADP(+)-binding positions include 166–168, Ser191, and Ile232; that span reads GRS.

The protein belongs to the tetrahydrofolate dehydrogenase/cyclohydrolase family. As to quaternary structure, homodimer.

The enzyme catalyses (6R)-5,10-methylene-5,6,7,8-tetrahydrofolate + NADP(+) = (6R)-5,10-methenyltetrahydrofolate + NADPH. It carries out the reaction (6R)-5,10-methenyltetrahydrofolate + H2O = (6R)-10-formyltetrahydrofolate + H(+). The protein operates within one-carbon metabolism; tetrahydrofolate interconversion. Catalyzes the oxidation of 5,10-methylenetetrahydrofolate to 5,10-methenyltetrahydrofolate and then the hydrolysis of 5,10-methenyltetrahydrofolate to 10-formyltetrahydrofolate. The protein is Bifunctional protein FolD of Wolbachia pipientis wMel.